A 706-amino-acid chain; its full sequence is Protein-glutamine gamma-glutamyltransferase 6 (706 aa).

Ca(2+)-binding residues include A223, N226, and N228. Residue C274 is part of the active site. 5 residues coordinate Ca(2+): D303, D305, N307, S309, and D327. Residues H333 and D356 contribute to the active site. Ca(2+) contacts are provided by N396, T417, E445, and E450.

The protein belongs to the transglutaminase superfamily. Transglutaminase family. Requires Ca(2+) as cofactor.

It is found in the cytoplasm. The enzyme catalyses L-glutaminyl-[protein] + L-lysyl-[protein] = [protein]-L-lysyl-N(6)-5-L-glutamyl-[protein] + NH4(+). Functionally, catalyzes the cross-linking of proteins and the conjugation of polyamines to proteins. The protein is Protein-glutamine gamma-glutamyltransferase 6 (TGM6) of Homo sapiens (Human).